Reading from the N-terminus, the 134-residue chain is Transcription antitermination protein NusB (134 aa).

Belongs to the NusB family.

Its function is as follows. Involved in transcription antitermination. Required for transcription of ribosomal RNA (rRNA) genes. Binds specifically to the boxA antiterminator sequence of the ribosomal RNA (rrn) operons. The protein is Transcription antitermination protein NusB of Shewanella frigidimarina (strain NCIMB 400).